The primary structure comprises 458 residues: A-type ATP synthase subunit B (458 aa).

It belongs to the ATPase alpha/beta chains family. Has multiple subunits with at least A(3), B(3), C, D, E, F, H, I and proteolipid K(x).

It is found in the cell membrane. Functionally, component of the A-type ATP synthase that produces ATP from ADP in the presence of a proton gradient across the membrane. The B chain is a regulatory subunit. The protein is A-type ATP synthase subunit B of Methanocella arvoryzae (strain DSM 22066 / NBRC 105507 / MRE50).